The following is a 455-amino-acid chain: Bifunctional protein GlmU (455 aa).

Positions 1–226 are pyrophosphorylase; it reads MSLDIVILAA…PMEVQGANDR (226 aa). Residues 8–11, Lys-22, Gln-73, 78–79, 99–101, Gly-136, Glu-151, Asn-166, and Asn-224 contribute to the UDP-N-acetyl-alpha-D-glucosamine site; these read LAAG, GT, and YGD. Residue Asp-101 participates in Mg(2+) binding. A Mg(2+)-binding site is contributed by Asn-224. Residues 227–247 are linker; that stretch reads RQLSELERHYQLREGRRLMAQ. An N-acetyltransferase region spans residues 248–455; sequence GVTLRDPARF…WKRPEKTKKS (208 aa). UDP-N-acetyl-alpha-D-glucosamine is bound by residues Arg-330 and Lys-348. The active-site Proton acceptor is the His-360. Residues Tyr-363 and Asn-374 each contribute to the UDP-N-acetyl-alpha-D-glucosamine site. Acetyl-CoA contacts are provided by residues Ala-377, 383–384, Ser-402, Ala-420, and Arg-437; that span reads NY.

The protein in the N-terminal section; belongs to the N-acetylglucosamine-1-phosphate uridyltransferase family. This sequence in the C-terminal section; belongs to the transferase hexapeptide repeat family. As to quaternary structure, homotrimer. It depends on Mg(2+) as a cofactor.

Its subcellular location is the cytoplasm. It catalyses the reaction alpha-D-glucosamine 1-phosphate + acetyl-CoA = N-acetyl-alpha-D-glucosamine 1-phosphate + CoA + H(+). The enzyme catalyses N-acetyl-alpha-D-glucosamine 1-phosphate + UTP + H(+) = UDP-N-acetyl-alpha-D-glucosamine + diphosphate. It functions in the pathway nucleotide-sugar biosynthesis; UDP-N-acetyl-alpha-D-glucosamine biosynthesis; N-acetyl-alpha-D-glucosamine 1-phosphate from alpha-D-glucosamine 6-phosphate (route II): step 2/2. It participates in nucleotide-sugar biosynthesis; UDP-N-acetyl-alpha-D-glucosamine biosynthesis; UDP-N-acetyl-alpha-D-glucosamine from N-acetyl-alpha-D-glucosamine 1-phosphate: step 1/1. Its pathway is bacterial outer membrane biogenesis; LPS lipid A biosynthesis. Its function is as follows. Catalyzes the last two sequential reactions in the de novo biosynthetic pathway for UDP-N-acetylglucosamine (UDP-GlcNAc). The C-terminal domain catalyzes the transfer of acetyl group from acetyl coenzyme A to glucosamine-1-phosphate (GlcN-1-P) to produce N-acetylglucosamine-1-phosphate (GlcNAc-1-P), which is converted into UDP-GlcNAc by the transfer of uridine 5-monophosphate (from uridine 5-triphosphate), a reaction catalyzed by the N-terminal domain. This is Bifunctional protein GlmU from Pseudomonas putida (strain GB-1).